Here is a 212-residue protein sequence, read N- to C-terminus: MAIGLIGRKVGMTRIFNEDGASVPVTVIEIAANRVTQVRTLDTDGYRALQVTTGTKKANRITKPEAGHFAKAGVEAGRGLWEMRLADGEGEGIEVGAELNVDIFADIAKVDVTGQSKGKGFQGGIKRWNFAMQDATHGNSLAHRSNGSIGQNQTPGRVFKGKKMSGHMGAERVTTQNLEVIRVDAERNLLLVKGAVPGATNGDLIIKPAVKA.

Residue Gln-153 is modified to N5-methylglutamine.

Belongs to the universal ribosomal protein uL3 family. As to quaternary structure, part of the 50S ribosomal subunit. Forms a cluster with proteins L14 and L19. Post-translationally, methylated by PrmB.

In terms of biological role, one of the primary rRNA binding proteins, it binds directly near the 3'-end of the 23S rRNA, where it nucleates assembly of the 50S subunit. The protein is Large ribosomal subunit protein uL3 of Shewanella halifaxensis (strain HAW-EB4).